Consider the following 400-residue polypeptide: Large envelope protein (400 aa).

Position 1 is an N-acetylmethionine (Met1). A disordered region spans residues 1–20 (MGGWSAKPRKGMGTNLSVPN). The N-myristoyl glycine; by host moiety is linked to residue Gly2. Residues 2 to 119 (GGWSAKPRKG…PPLRDSHPQA (118 aa)) are pre-S1. The segment at 2–174 (GGWSAKPRKG…SSRTGDPALN (173 aa)) is pre-S. At 2–181 (GGWSAKPRKG…ALNMENITSG (180 aa)) the chain is on the virion surface; in external conformation side. Residues 2-253 (GGWSAKPRKG…PGYRWMCLRR (252 aa)) are Intravirion; in internal conformation-facing. N-linked (GlcNAc...) asparagine glycosylation occurs at Trp4. The tract at residues 120 to 174 (MQWNSTAFQQALQDPRVRGLFFPAGGSSSGTVNPAPNIASHISSISSRTGDPALN) is pre-S2. Residues 182 to 202 (FLGPLLVLQAGFFLLTRILTI) traverse the membrane as a helical segment. Over 203 to 253 (PQSLDSWWTSLNFLGGSPVCLGQNSQSPTSNHSPTSCPPICPGYRWMCLRR) the chain is Intravirion; in external conformation. Residues 254-274 (FIIFLFILLLCLIFLLVLLDY) form a helical membrane-spanning segment. The Virion surface portion of the chain corresponds to 275-348 (QGMLPVCPLI…WASVRFSWLS (74 aa)). N-linked (GlcNAc...) asparagine; by host glycosylation is present at Asn320. The chain crosses the membrane as a helical span at residues 349–369 (LLVPFVQWFVGLSPTVWLSVI). Residues 370 to 375 (WMMWYW) are Intravirion-facing. A helical membrane pass occupies residues 376–398 (GPSLYNILSPFIPLLPIFFCLWV). At 399–400 (YI) the chain is on the virion surface side.

Belongs to the orthohepadnavirus major surface antigen family. In terms of assembly, in its internal form (Li-HBsAg), interacts with the capsid protein and with the isoform S. Interacts with host chaperone CANX. As to quaternary structure, associates with host chaperone CANX through its pre-S2 N glycan; this association may be essential for isoform M proper secretion. Interacts with isoform L. Interacts with the antigens of satellite virus HDV (HDVAgs); this interaction is required for encapsidation of HDV genomic RNA. In terms of processing, isoform M is N-terminally acetylated by host at a ratio of 90%, and N-glycosylated by host at the pre-S2 region. Post-translationally, myristoylated.

The protein resides in the virion membrane. Its function is as follows. The large envelope protein exists in two topological conformations, one which is termed 'external' or Le-HBsAg and the other 'internal' or Li-HBsAg. In its external conformation the protein attaches the virus to cell receptors and thereby initiating infection. This interaction determines the species specificity and liver tropism. This attachment induces virion internalization predominantly through caveolin-mediated endocytosis. The large envelope protein also assures fusion between virion membrane and endosomal membrane. In its internal conformation the protein plays a role in virion morphogenesis and mediates the contact with the nucleocapsid like a matrix protein. The middle envelope protein plays an important role in the budding of the virion. It is involved in the induction of budding in a nucleocapsid independent way. In this process the majority of envelope proteins bud to form subviral lipoprotein particles of 22 nm of diameter that do not contain a nucleocapsid. In Hepatitis B virus genotype A1 subtype adw2 (isolate Southern-Africa/Cai) (HBV-A), this protein is Large envelope protein.